The following is a 103-amino-acid chain: MANQKIRIRLKAYDYALIDRSAQEIVETAKRTGAVVKGPIPLPTKIERFNILRSPHVNKTSREQLEIRTHLRLMDIVDWTDKTTDALMKLDLPAGVDVEIKVQ.

It belongs to the universal ribosomal protein uS10 family. As to quaternary structure, part of the 30S ribosomal subunit.

In terms of biological role, involved in the binding of tRNA to the ribosomes. This is Small ribosomal subunit protein uS10 from Neisseria gonorrhoeae (strain ATCC 700825 / FA 1090).